A 256-amino-acid polypeptide reads, in one-letter code: Pimeloyl-[acyl-carrier protein] methyl ester esterase (256 aa).

In terms of domain architecture, AB hydrolase-1 spans 15 to 242; the sequence is HLVLLHGWGL…AAHAPFISHP (228 aa). Substrate-binding positions include W22, 82 to 83, and 143 to 147; these read SL and FLALQ. Catalysis depends on S82, which acts as the Nucleophile. Active-site residues include D207 and H235. H235 is a binding site for substrate.

This sequence belongs to the AB hydrolase superfamily. Carboxylesterase BioH family. As to quaternary structure, monomer.

It localises to the cytoplasm. It catalyses the reaction 6-carboxyhexanoyl-[ACP] methyl ester + H2O = 6-carboxyhexanoyl-[ACP] + methanol + H(+). Its pathway is cofactor biosynthesis; biotin biosynthesis. Its function is as follows. The physiological role of BioH is to remove the methyl group introduced by BioC when the pimeloyl moiety is complete. It allows to synthesize pimeloyl-ACP via the fatty acid synthetic pathway through the hydrolysis of the ester bonds of pimeloyl-ACP esters. The polypeptide is Pimeloyl-[acyl-carrier protein] methyl ester esterase (Escherichia coli O8 (strain IAI1)).